Reading from the N-terminus, the 523-residue chain is Cytochrome P450 monooxygenase ple5B (523 aa).

A helical membrane pass occupies residues 16 to 33 (IAAAAAGSAVAVYKLLQL). N-linked (GlcNAc...) asparagine glycans are attached at residues N82, N103, N122, N295, N379, and N423. C446 serves as a coordination point for heme.

It belongs to the cytochrome P450 family. Heme is required as a cofactor.

Its subcellular location is the membrane. The protein operates within secondary metabolite biosynthesis; terpenoid biosynthesis. Functionally, cytochrome P450 monooxygenase; part of the gene cluster that mediates the biosynthesis of pleuromutilin, a tricyclic diterpene showing antibacterial properties. The geranylgeranyl diphosphate (GGPP) synthase ple4 catalyzes the first step in pleuromutilin biosynthesis. GGPP is then substrate of the premutilin synthase (PS) ple3 to yield premutilin. Premutilin synthase is a bifunctional enzyme composed of the fusion of a class II diterpene cyclase (DTC) and a class I diterpene synthase (DTS), with the corresponding domains and active sites containing characteristic aspartate-rich motifs. GGPP is first converted to mutildienyl-diphosphate (MPP) at the class II DTC site. MPP is subsequently further cyclized at the class I DTS site, followed by a 1,5-hydride shift and addition of water prior to terminating deprotonation, to yield premutilin. The cytochrome P450 monooxygenases ple5 and ple6 hydroxylate premutilin at C-11 and C-3, respectively, producing 11-hydroxypremutilin and 3-hydroxypremutilin. The combination of the actions of both ple5 and ple6 leads to the production of 3,11-dihydroxypremutilin. The short chain dehydrogenase ple7 further converts 3,11-dihydroxypremutilin into mutilin. The acetyltransferase ple2 then acetylates mutilin to produce 14-O-acetylmutilin. Finally, the cytochrome P450 monooxygenase ple1 catalyzes hydroxylation on the alpha position of the acetyl side chain of 14-O-acetylmutilin to yield pleuromutilin. The chain is Cytochrome P450 monooxygenase ple5B from Rhodocybe pseudopiperita (Clitopilus pseudopiperitus).